Here is a 104-residue protein sequence, read N- to C-terminus: UPF0213 protein plu4503 (104 aa).

The GIY-YIG domain occupies 4–79 (NQWVLYLLKT…KQLSKQQKER (76 aa)).

Belongs to the UPF0213 family.

This is UPF0213 protein plu4503 from Photorhabdus laumondii subsp. laumondii (strain DSM 15139 / CIP 105565 / TT01) (Photorhabdus luminescens subsp. laumondii).